A 241-amino-acid chain; its full sequence is Large ribosomal subunit protein uL1 (241 aa).

The protein belongs to the universal ribosomal protein uL1 family. As to quaternary structure, part of the 50S ribosomal subunit.

In terms of biological role, binds directly to 23S rRNA. The L1 stalk is quite mobile in the ribosome, and is involved in E site tRNA release. Protein L1 is also a translational repressor protein, it controls the translation of the L11 operon by binding to its mRNA. This chain is Large ribosomal subunit protein uL1, found in Streptomyces avermitilis (strain ATCC 31267 / DSM 46492 / JCM 5070 / NBRC 14893 / NCIMB 12804 / NRRL 8165 / MA-4680).